Here is a 72-residue protein sequence, read N- to C-terminus: Exodeoxyribonuclease 7 small subunit (72 aa).

This sequence belongs to the XseB family. As to quaternary structure, heterooligomer composed of large and small subunits.

The protein localises to the cytoplasm. The enzyme catalyses Exonucleolytic cleavage in either 5'- to 3'- or 3'- to 5'-direction to yield nucleoside 5'-phosphates.. In terms of biological role, bidirectionally degrades single-stranded DNA into large acid-insoluble oligonucleotides, which are then degraded further into small acid-soluble oligonucleotides. The sequence is that of Exodeoxyribonuclease 7 small subunit from Chlamydia trachomatis serovar D (strain ATCC VR-885 / DSM 19411 / UW-3/Cx).